Consider the following 64-residue polypeptide: PYLa/PGLa A (64 aa).

Residues 1-20 (MYKQIFLCLIIAALCATIMA) form the signal peptide. The propeptide occupies 21 to 35 (EASAFADADEDDDKR). Leucine 59 is modified (leucine amide). Positions 60-64 (GRRDS) are excised as a propeptide.

The protein belongs to the gastrin/cholecystokinin family. Magainin subfamily. As to expression, expressed by the skin glands. Synthesized in the stomach and stored in a novel granular multinucleated cell in the gastric mucosa. Stored as active, processed peptides in large granules within the granular gland secretions of the skin.

It is found in the secreted. PGLa and PGLa-H display a broad-spectrum of antibacterial activity against a range of Gram-positive and Gram-negative bacteria. PGLa also displays antifungal activity against C.albicans ATCC 14053. PGLa-H shows moderate antibacterial activity against the multidrug-resistant methicillin-resistant S.aureus (MRSA) but exhibits very little hemolytic activity. This is PYLa/PGLa A (pgla-a) from Xenopus laevis (African clawed frog).